A 271-amino-acid polypeptide reads, in one-letter code: Formamidopyrimidine-DNA glycosylase (271 aa).

Pro-2 acts as the Schiff-base intermediate with DNA in catalysis. The active-site Proton donor is the Glu-3. The active-site Proton donor; for beta-elimination activity is the Lys-57. DNA-binding residues include His-90, Arg-109, and Lys-151. An FPG-type zinc finger spans residues 236 to 270 (HVYGRGGETCTQCGHLLSEIKLGQRATVFCSLCQK). Residue Arg-260 is the Proton donor; for delta-elimination activity of the active site.

This sequence belongs to the FPG family. Monomer. The cofactor is Zn(2+).

It carries out the reaction Hydrolysis of DNA containing ring-opened 7-methylguanine residues, releasing 2,6-diamino-4-hydroxy-5-(N-methyl)formamidopyrimidine.. The catalysed reaction is 2'-deoxyribonucleotide-(2'-deoxyribose 5'-phosphate)-2'-deoxyribonucleotide-DNA = a 3'-end 2'-deoxyribonucleotide-(2,3-dehydro-2,3-deoxyribose 5'-phosphate)-DNA + a 5'-end 5'-phospho-2'-deoxyribonucleoside-DNA + H(+). Its function is as follows. Involved in base excision repair of DNA damaged by oxidation or by mutagenic agents. Acts as a DNA glycosylase that recognizes and removes damaged bases. Has a preference for oxidized purines, such as 7,8-dihydro-8-oxoguanine (8-oxoG). Has AP (apurinic/apyrimidinic) lyase activity and introduces nicks in the DNA strand. Cleaves the DNA backbone by beta-delta elimination to generate a single-strand break at the site of the removed base with both 3'- and 5'-phosphates. The polypeptide is Formamidopyrimidine-DNA glycosylase (Shewanella halifaxensis (strain HAW-EB4)).